A 708-amino-acid polypeptide reads, in one-letter code: ATP-dependent DNA helicase Hel308 (708 aa).

The Q motif motif lies at 1–29 (MSIDDLKLPSNVIDIIKNRGIKKLNPPQT). Residues glutamine 28 and 46–53 (SPTGSGKT) contribute to the ATP site. Positions 33-196 (KKGLLDGNRL…WLGAEPVATN (164 aa)) constitute a Helicase ATP-binding domain. Positions 145–148 (DELH) match the DEAH box motif. The Helicase C-terminal domain occupies 229 to 435 (HGDDAIIAYT…ERAFYTFLLG (207 aa)).

Belongs to the helicase family. Hel308 subfamily. Monomer.

The enzyme catalyses Couples ATP hydrolysis with the unwinding of duplex DNA by translocating in the 3'-5' direction.. It catalyses the reaction ATP + H2O = ADP + phosphate + H(+). DNA-dependent ATPase and 3'-5' DNA helicase that may be involved in repair of stalled replication forks. In Saccharolobus solfataricus (strain ATCC 35092 / DSM 1617 / JCM 11322 / P2) (Sulfolobus solfataricus), this protein is ATP-dependent DNA helicase Hel308.